A 424-amino-acid chain; its full sequence is UDP-N-acetylglucosamine 1-carboxyvinyltransferase (424 aa).

22–23 contributes to the phosphoenolpyruvate binding site; the sequence is KN. Arginine 96 is a UDP-N-acetyl-alpha-D-glucosamine binding site. Cysteine 120 functions as the Proton donor in the catalytic mechanism. Cysteine 120 carries the post-translational modification 2-(S-cysteinyl)pyruvic acid O-phosphothioketal. UDP-N-acetyl-alpha-D-glucosamine is bound by residues 125–129, aspartate 312, and isoleucine 334; that span reads RPVDQ.

It belongs to the EPSP synthase family. MurA subfamily.

It is found in the cytoplasm. The enzyme catalyses phosphoenolpyruvate + UDP-N-acetyl-alpha-D-glucosamine = UDP-N-acetyl-3-O-(1-carboxyvinyl)-alpha-D-glucosamine + phosphate. Its pathway is cell wall biogenesis; peptidoglycan biosynthesis. Functionally, cell wall formation. Adds enolpyruvyl to UDP-N-acetylglucosamine. The polypeptide is UDP-N-acetylglucosamine 1-carboxyvinyltransferase (Polynucleobacter necessarius subsp. necessarius (strain STIR1)).